We begin with the raw amino-acid sequence, 158 residues long: Toxin Tse2 (158 aa).

As to quaternary structure, forms a heterotetramer with Tsi2 consisting of two Tse2 dimers and two Tsi2 dimers. Formation of the complex inactivates Tse2 enzymatic activity.

Its subcellular location is the secreted. Its function is as follows. Toxin secreted by the H1 type VI (H1-T6SS) secretion system into the cytoplasm of recipient cells. Acts likely as a NAD-dependent cytotoxin towards both prokaryotic and eukaryotic cells. The polypeptide is Toxin Tse2 (Pseudomonas aeruginosa (strain ATCC 15692 / DSM 22644 / CIP 104116 / JCM 14847 / LMG 12228 / 1C / PRS 101 / PAO1)).